The following is a 2226-amino-acid chain: MPSKYGNGSGTGRFVKNSTIKSEFRNNGYNRAEVIDPSIANNPMLNDSIQKRELVNRIDQLDSIMGFDRIEHGEMDGAKPRRGWLVNMHATTIPTDEYLAGYSGVDYYFLDEEGGSFKATIRYDPYFYLVVIPGHESEVEEMLRKVLEPCSLKGLLRVAKEDLSLPNHLVGLKKTLVKLSFHNVVDLLSARRLLNPIIKDNKMKRDTRDIYQVMNFNNVNNANGTEIQTNFNDKSTEQIADPATLIDDIREYDVPYHVRVSIDEKIRVGKWYNVFVKHSEVRLEEDKEKIAFADPVILAFDIETTKAPLKFPDAKTDQIMMISYMIDGEGFLITNREIISEDIEDFEYTPKPEYPGLFTIFNEPDEKMVLVRFFEHIRDSRPTVIATFNGDFFDWPFVEKRTTFHDMDMFEEIGFAKDNEGEYKSKYCVHMDCYRWVKRDSYLPQGSQGLKAVTTAKLGYNPTELDPELMTPYAYEKPQLLSEYSVSDAVATYYLYYKYVHPFIFSLCTIIPLNPDEVLRKGTGTLCEMLLMVQAYENGIVLPNKHTEPIERFYDGHLLESETYVGGHVESLEAGVFRSDLPNDFKVDPTAVDEILGDLHNALKFCIEVENNKKVEDVENYDEVYNQIKDSLVNLRETPIRHENPLIFHVDVASMYPNIMTSNRLQPDSMKSEEDCAACDFNRPGKNCDRRLPWSWRGEYYPAEMNEYGMIKRTLQNETFPPAKPWLPAKTFDELSYSEQASLIKKRLSDYSRKVYHRIKQSKTVSREAIVCQRENPFYVDTVRSFRDRRYEFKTLVKVWKGKTAKIDKHDTIAKDEAKKMVVLYDSLQLAHKVILNSFYGYVMRKGSRWYSMEMAGITCLTGATIIQMARSLVERLGRPLELDTDGIWCILPKSFPENYYFKCKDGKNIFLEYPCSMLNYLVHDKFTNHQYQDLVDPNTFKYKTRSENSIFFEVDGPYKAMVLPTSKEEGKGLKKRYAVFNDDGSLAELKGFELKRRGELQLIKNFQSDIFKLFLDGDSLENCYKSVATVANNWLDVLDTKGGMLEDEDLIELICENRSMSKSLAEYGNQKSTSITTAKRLGEFLGEEMIKDAGLACKYIISSKPIGSPVTERAVPVSIFSSEKKEFFLKKWLKDPSLENFDPRSVIDWNYYYERLASVVQKIISIPAALQDIKNPVPRVPHPEWLQKKINSKEDSKQQSSISSFFGQATKKEVLQKSIKSIQDIEDFGELDASIPKGRVSKVTSRKRRNGKANNVSDSEEEERNNAILNGECPSMTEDYAGFLQYQKAKWKVQEKNRERRKKLFGSNAESSHRSSVGGIIRRQAENIAGSDWEILEYKADPSKPGDIKVYVSASNKVHSFTFHVPKKVYASFKTELSPKKAIRNCEIEKSTAVLPNGHDGSNLYKLTMPEETYLEESTKVESLLQDSNILGLYETQVGAVERAIIDLGNNIRFDDTKVGALGKGLKNGFNVKDLMKVERDSYLKRFGMDIIYFLHLVTNSYEFFTIFKSWENTASIFVLKPSANAQELPSNMDKIYREIFEAKKDRLGKMYSIIEYPDEMKFETTYFHDTAKIFKKMDNCISKIYESRSNRALLAVQSPYTTKVLNLLKSTSSFPTIKMNVSELSLPAVGWQSLIIKRVVNHYFVLASWIKKLISLAKYGNVPLCNLQIENMGYLIDIEYARRLSQSNIVLWLSSRPLPDHGGFEMDKAQDFENLEFPTINNPEIYETACLEVEIGTLTINTILTSALINEAEGTDLADDAVQFDNNNGASTIAEDSFSTPALSILRGMVKDWWDDALKNNDNADSMMNNLVTWVQRSDSLLYDYSLHYHVHNLTTKALLQLIGEFKRMNAQVIFANRNKMLIQTTKVSIENSYAYGQYILKAARSKPLFNFLDLRIVKYWDLLVWMDEYNFGGRCCTEITNDEVQNLIPVNKWQITKFLPVIFQNEFEDWLIIFLDSLTKFKNDTLIPGTQTGTPRVTQIAHILKGQKKLDSNETEEESISNGVMELFRKPLQKRIEKLARRQNESILNPELRQEYEFPKLPGSYTSMKNPSLELVKFLCAVFGLSRKRNIEVRLLRRELLSIFDIKEFSDEAAFKNPSSSLKIPHVICDYCNYIRDIDFCRDEQKNIWNCSNCNKTYNRVAIEEELVAQYNKLLTKFYIQDLKCSKCHQIKSDNMSEYCKCSGKWTETLKYTEVDKRLQIFSNVGGFFNLQLLKGIIEELAL.

Positions 1240 to 1265 are disordered; the sequence is RVSKVTSRKRRNGKANNVSDSEEEER. Residues cysteine 2112, cysteine 2115, cysteine 2134, and cysteine 2137 each contribute to the Zn(2+) site. Residues 2112–2137 form a CysA-type zinc finger; it reads CDYCNYIRDIDFCRDEQKNIWNCSNC. Positions 2168, 2171, 2183, and 2185 each coordinate [4Fe-4S] cluster. A CysB motif motif is present at residues 2168–2185; the sequence is CSKCHQIKSDNMSEYCKC.

The protein belongs to the DNA polymerase type-B family. In terms of assembly, heterotetramer. Consists of 4 subunits: POL2, DPB2, DPB3 and DPB4. The cofactor is [4Fe-4S] cluster.

Its subcellular location is the nucleus. The enzyme catalyses DNA(n) + a 2'-deoxyribonucleoside 5'-triphosphate = DNA(n+1) + diphosphate. DNA polymerase II participates in chromosomal DNA replication. The protein is DNA polymerase epsilon catalytic subunit A (POL2) of Debaryomyces hansenii (strain ATCC 36239 / CBS 767 / BCRC 21394 / JCM 1990 / NBRC 0083 / IGC 2968) (Yeast).